Reading from the N-terminus, the 153-residue chain is ORM1-like protein 2 (153 aa).

Residues 1-21 (MNVGVAHSEVNPNTRVMNSRG) lie on the Cytoplasmic side of the membrane. 2 helical membrane-spanning segments follow: residues 22-42 (IWLAYIILVGLLHMVLLSIPF) and 43-63 (FSIPVVWTLTNVIHNLATYVF). At 64–105 (LHTVKGTPFETPDQGKARLLTHWEQMDYGLQFTSSRKFLSIS) the chain is on the cytoplasmic side. Residues 106–126 (PIVLYLLASFYTKYDAAHFLI) form a helical membrane-spanning segment. The Extracellular segment spans residues 127 to 153 (NTASLLSVLLPKLPQFHGVRVFGINKY).

This sequence belongs to the ORM family. Ceramide-sensitive subunit of the serine palmitoyltransferase (SPT) complex, which is also composed of SPTLC1, SPTLC2/3 and SPTSSA/B. In terms of tissue distribution, widely expressed. Expressed in adult and fetal heart, brain, lung, liver, skeletal muscle and kidney. Expressed in adult pancreas and placenta and in fetal spleen abd thymus.

The protein resides in the endoplasmic reticulum membrane. In terms of biological role, plays an essential role in the homeostatic regulation of sphingolipid de novo biosynthesis by modulating the activity of the serine palmitoyltransferase (SPT) in response to ceramide levels. When complexed to SPT, the binding of ceramides to its N-terminus stabilizes a conformation that block SPT substrate entry, hence preventing SPT catalytic activity. Through this mechanism, maintains ceramide levels at sufficient concentrations for the production of complex sphingolipids, but which prevents the accumulation of ceramides to levels that trigger apoptosis. The polypeptide is ORM1-like protein 2 (ORMDL2) (Homo sapiens (Human)).